Consider the following 369-residue polypeptide: Transmembrane protein adipocyte-associated 1 (369 aa).

N-linked (GlcNAc...) asparagine glycosylation occurs at N20. 7 helical membrane passes run 45-65 (LLLL…LPLA), 73-93 (SSPI…VGIA), 120-140 (FFLL…GHLE), 148-168 (VLAI…TLEI), 189-209 (QFWL…VILP), 237-257 (LLQG…LCCV), and 262-282 (FLYF…GFFG). N329 is a glycosylation site (N-linked (GlcNAc...) asparagine).

The protein belongs to the UPF0359 family. In terms of tissue distribution, ubiquitous, with higher levels in heart, brain, lung, liver and kidney.

Its subcellular location is the membrane. The polypeptide is Transmembrane protein adipocyte-associated 1 (Tpra1) (Mus musculus (Mouse)).